A 118-amino-acid chain; its full sequence is MKAKVLKSKIANRLKRKRRIRAKISGCASLPRVSVFRSNRYLSVQAINDATATTLTSLSSKATGHKANKEGGAALGAAFAAKLKEVGISQIVFDRNGYQYHGVIAAFGDALRENEIKF.

Belongs to the universal ribosomal protein uL18 family. As to quaternary structure, part of the 50S ribosomal subunit; part of the 5S rRNA/L5/L18/L25 subcomplex. Contacts the 5S and 23S rRNAs.

Its function is as follows. This is one of the proteins that bind and probably mediate the attachment of the 5S RNA into the large ribosomal subunit, where it forms part of the central protuberance. This is Large ribosomal subunit protein uL18 from Sulfurimonas denitrificans (strain ATCC 33889 / DSM 1251) (Thiomicrospira denitrificans (strain ATCC 33889 / DSM 1251)).